A 284-amino-acid chain; its full sequence is MATAVRGLKLQTEDYFLTDKNVVMVAERHPQPVFPLHHHDFDELVIVWRGNGLHLWNDVPYRITRGDMFYVSANDRHSYESVHGLELDNILYIRNRLTLSADWQRLLPGGEHPQSQRHWCLGSEGMDTLREKVDALRQECMKSDALSLQLSEALLLQIALLAARYRHTPDNPQLADAHQLDMLMNALRASIAAPFRFEAFCEQHHFSARSLRSRFKEQTGMSVPHYLRQLRLCKAMELLRYDLQTIGDIAALCGFEDSNYFSVVFHQAFGVSPSAYRQRFLNVE.

Positions 181–279 constitute an HTH araC/xylS-type domain; it reads DMLMNALRAS…GVSPSAYRQR (99 aa). 2 consecutive DNA-binding regions (H-T-H motif) follow at residues 198–219 and 246–269; these read EAFC…KEQT and IGDI…HQAF.

In terms of assembly, binds DNA as a dimer.

It is found in the cytoplasm. In terms of biological role, activates expression of the rhaSR operon in response to L-rhamnose. The chain is HTH-type transcriptional activator RhaR from Pectobacterium carotovorum subsp. carotovorum (strain PC1).